We begin with the raw amino-acid sequence, 77 residues long: MKEQKLIHEGLITESLPNGMFRVRLDNEKMILGYVSGRIRRSFIRILPGDRVKIEVSRYDSTRGRIIYRLRNKDSND.

The S1-like domain maps to 1–71 (MKEQKLIHEG…TRGRIIYRLR (71 aa)).

Belongs to the IF-1 family. As to quaternary structure, component of the 30S ribosomal translation pre-initiation complex which assembles on the 30S ribosome in the order IF-2 and IF-3, IF-1 and N-formylmethionyl-tRNA(fMet); mRNA recruitment can occur at any time during PIC assembly.

It is found in the plastid. It localises to the chloroplast. One of the essential components for the initiation of protein synthesis. Stabilizes the binding of IF-2 and IF-3 on the 30S subunit to which N-formylmethionyl-tRNA(fMet) subsequently binds. Helps modulate mRNA selection, yielding the 30S pre-initiation complex (PIC). Upon addition of the 50S ribosomal subunit IF-1, IF-2 and IF-3 are released leaving the mature 70S translation initiation complex. This chain is Translation initiation factor IF-1, chloroplastic, found in Ceratophyllum demersum (Rigid hornwort).